A 198-amino-acid chain; its full sequence is Penicillin-binding protein activator LpoB (198 aa).

The first 20 residues, 1 to 20, serve as a signal peptide directing secretion; the sequence is MSWIRIRRSGVLLLALVLSG. The N-palmitoyl cysteine moiety is linked to residue Cys21. A lipid anchor (S-diacylglycerol cysteine) is attached at Cys21. The disordered stretch occupies residues 28–62; the sequence is PQPAAPVEPVTPPVNVPQPPKAEPGQNVPPPPKMQ. Residues 30 to 61 show a composition bias toward pro residues; that stretch reads PAAPVEPVTPPVNVPQPPKAEPGQNVPPPPKM.

This sequence belongs to the LpoB family. Interacts with PBP1b.

The protein resides in the cell outer membrane. Functionally, regulator of peptidoglycan synthesis that is essential for the function of penicillin-binding protein 1B (PBP1b). This is Penicillin-binding protein activator LpoB from Erwinia amylovora (strain CFBP1430).